We begin with the raw amino-acid sequence, 179 residues long: Protein YjaZ (179 aa).

The chain is Protein YjaZ from Escherichia coli (strain K12).